Consider the following 118-residue polypeptide: Large ribosomal subunit protein bL19 (118 aa).

It belongs to the bacterial ribosomal protein bL19 family.

This protein is located at the 30S-50S ribosomal subunit interface and may play a role in the structure and function of the aminoacyl-tRNA binding site. The polypeptide is Large ribosomal subunit protein bL19 (Marinobacter nauticus (strain ATCC 700491 / DSM 11845 / VT8) (Marinobacter aquaeolei)).